Reading from the N-terminus, the 429-residue chain is MKKKPFYKVLYVQVIFAIIVGVILGHFYPALATDMKPLGDGFIKLIKMVIGPIIFCTVVTGIAGMEDMKKVGRVGGKALLYFEVVSTFALLLGLAATHILRPGVGFNIDPATLDGKAVASYAAKAHGQSTVDFLLHIIPNTMVDAFAQGEILQILLIALLFGSVLAHLGERGKVVTDFIDGLTRVLFGIVHIVTKLAPIGAFGAMAFTIGKYGVGSLVPLLKLIGTFYLTSIVFVLVVLGTIARVTGFSIIRFVSYIKEELLIVLGTSSSEAALPQLMEKLEKAGCSRSVVGLVVPTGYSFNLDGTNIYMTMAVLFIAQATNIELTWMQQLTLLAVAMLTSKGASGVTGAGFITLAATLAVVPTIPLSGMVLILGIDRFMSECRALTNIVGNGVATVVVSAWEKELDRNKLRQALTGGGEVKTTEAAGV.

The next 8 helical transmembrane spans lie at 9-29, 45-65, 79-99, 149-169, 185-205, 223-243, 308-328, and 356-376; these read VLYVQVIFAIIVGVILGHFYP, LIKMVIGPIIFCTVVTGIAGM, LLYFEVVSTFALLLGLAATHI, GEILQILLIALLFGSVLAHLG, VLFGIVHIVTKLAPIGAFGAM, LIGTFYLTSIVFVLVVLGTIA, IYMTMAVLFIAQATNIELTWM, and AATLAVVPTIPLSGMVLILGI.

The protein belongs to the dicarboxylate/amino acid:cation symporter (DAACS) (TC 2.A.23) family.

It is found in the cell inner membrane. Its function is as follows. Responsible for the transport of dicarboxylates such as succinate, fumarate, and malate from the periplasm across the membrane. This Burkholderia ambifaria (strain ATCC BAA-244 / DSM 16087 / CCUG 44356 / LMG 19182 / AMMD) (Burkholderia cepacia (strain AMMD)) protein is C4-dicarboxylate transport protein.